The sequence spans 332 residues: Ketol-acid reductoisomerase (NADP(+)) (332 aa).

Positions 1–182 constitute a KARI N-terminal Rossmann domain; the sequence is MATIYYEKDA…GCTRAGVLAT (182 aa). Residues 25–28, Arg48, Ser53, and 83–86 each bind NADP(+); these read YGSQ and DELQ. His108 is a catalytic residue. Gly134 is an NADP(+) binding site. A KARI C-terminal knotted domain is found at 183-328; sequence TFKEETETDL…KELRSMMPWL (146 aa). Mg(2+)-binding residues include Asp191, Glu195, Glu227, and Glu231. Ser252 provides a ligand contact to substrate.

Belongs to the ketol-acid reductoisomerase family. Requires Mg(2+) as cofactor.

The enzyme catalyses (2R)-2,3-dihydroxy-3-methylbutanoate + NADP(+) = (2S)-2-acetolactate + NADPH + H(+). It catalyses the reaction (2R,3R)-2,3-dihydroxy-3-methylpentanoate + NADP(+) = (S)-2-ethyl-2-hydroxy-3-oxobutanoate + NADPH + H(+). The protein operates within amino-acid biosynthesis; L-isoleucine biosynthesis; L-isoleucine from 2-oxobutanoate: step 2/4. It functions in the pathway amino-acid biosynthesis; L-valine biosynthesis; L-valine from pyruvate: step 2/4. Involved in the biosynthesis of branched-chain amino acids (BCAA). Catalyzes an alkyl-migration followed by a ketol-acid reduction of (S)-2-acetolactate (S2AL) to yield (R)-2,3-dihydroxy-isovalerate. In the isomerase reaction, S2AL is rearranged via a Mg-dependent methyl migration to produce 3-hydroxy-3-methyl-2-ketobutyrate (HMKB). In the reductase reaction, this 2-ketoacid undergoes a metal-dependent reduction by NADPH to yield (R)-2,3-dihydroxy-isovalerate. The protein is Ketol-acid reductoisomerase (NADP(+)) of Methanocella arvoryzae (strain DSM 22066 / NBRC 105507 / MRE50).